The chain runs to 204 residues: UPF0056 membrane protein CT_852 (204 aa).

6 helical membrane passes run 9 to 29 (TLLF…IALL), 39 to 59 (HIIL…VTFG), 66 to 86 (LGII…SIAI), 107 to 127 (IFFP…STLG), 138 to 158 (IVLG…LLSS), and 176 to 196 (FGIS…STAF).

It belongs to the UPF0056 (MarC) family.

The protein resides in the cell membrane. This is UPF0056 membrane protein CT_852 from Chlamydia trachomatis serovar D (strain ATCC VR-885 / DSM 19411 / UW-3/Cx).